Reading from the N-terminus, the 531-residue chain is Tryptophan 6-halogenase ThaL (531 aa).

The FAD site is built by Gly13, Thr15, Ala16, Ala39, Ile42, Ile45, Val47, and Ala50. The active site involves Lys79. L-tryptophan is bound at residue Pro111. Met198 and Leu349 together coordinate FAD. 2 residues coordinate chloride: Ser360 and Gly361. Residue Ile362 coordinates FAD. Residues Tyr454, Tyr455, Glu461, and Phe465 each contribute to the L-tryptophan site.

The protein belongs to the flavin-dependent halogenase family. Bacterial tryptophan halogenase subfamily. Homodimer. Monomer in solution.

The enzyme catalyses L-tryptophan + FADH2 + chloride + O2 = 6-chloro-L-tryptophan + FAD + 2 H2O. The catalysed reaction is D-tryptophan + FADH2 + chloride + O2 = 6-chloro-D-tryptophan + FAD + 2 H2O. Involved in the biosynthesis of thienodolin, a plant growth-regulating compound. Catalyzes the chlorination of tryptophan (Trp) at C6 position to yield 6-chloro-tryptophan. It is also able to use bromide ions to generate monobrominated Trp. In vitro, accepts a wide range of amides and peptides carrying either L- or D-Trp at the N-terminus. The polypeptide is Tryptophan 6-halogenase ThaL (Streptomyces albogriseolus).